A 417-amino-acid chain; its full sequence is Gamma-glutamyl phosphate reductase (417 aa).

Belongs to the gamma-glutamyl phosphate reductase family.

It is found in the cytoplasm. The catalysed reaction is L-glutamate 5-semialdehyde + phosphate + NADP(+) = L-glutamyl 5-phosphate + NADPH + H(+). Its pathway is amino-acid biosynthesis; L-proline biosynthesis; L-glutamate 5-semialdehyde from L-glutamate: step 2/2. Its function is as follows. Catalyzes the NADPH-dependent reduction of L-glutamate 5-phosphate into L-glutamate 5-semialdehyde and phosphate. The product spontaneously undergoes cyclization to form 1-pyrroline-5-carboxylate. This is Gamma-glutamyl phosphate reductase from Escherichia coli O7:K1 (strain IAI39 / ExPEC).